The sequence spans 405 residues: Argininosuccinate synthase (405 aa).

ATP is bound by residues 10 to 18 and Ala-37; that span reads AYSGGLDTS. L-citrulline is bound by residues Tyr-88 and Ser-93. Gly-118 contributes to the ATP binding site. Residues Thr-120, Asn-124, and Asp-125 each contribute to the L-aspartate site. L-citrulline is bound at residue Asn-124. Positions 128, 179, 188, 264, and 276 each coordinate L-citrulline.

It belongs to the argininosuccinate synthase family. Type 1 subfamily. As to quaternary structure, homotetramer.

It is found in the cytoplasm. The catalysed reaction is L-citrulline + L-aspartate + ATP = 2-(N(omega)-L-arginino)succinate + AMP + diphosphate + H(+). It functions in the pathway amino-acid biosynthesis; L-arginine biosynthesis; L-arginine from L-ornithine and carbamoyl phosphate: step 2/3. The polypeptide is Argininosuccinate synthase (Pseudomonas savastanoi pv. phaseolicola (strain 1448A / Race 6) (Pseudomonas syringae pv. phaseolicola (strain 1448A / Race 6))).